The sequence spans 490 residues: Acetyl-coenzyme A carboxylase carboxyl transferase subunit beta, chloroplastic (490 aa).

Residues L228–N490 form the CoA carboxyltransferase N-terminal domain. Zn(2+) is bound by residues C232, C235, C251, and C254. The C4-type zinc-finger motif lies at C232–C254.

It belongs to the AccD/PCCB family. Acetyl-CoA carboxylase is a heterohexamer composed of biotin carboxyl carrier protein, biotin carboxylase and 2 subunits each of ACCase subunit alpha and ACCase plastid-coded subunit beta (accD). Requires Zn(2+) as cofactor.

Its subcellular location is the plastid. The protein resides in the chloroplast stroma. It catalyses the reaction N(6)-carboxybiotinyl-L-lysyl-[protein] + acetyl-CoA = N(6)-biotinyl-L-lysyl-[protein] + malonyl-CoA. It participates in lipid metabolism; malonyl-CoA biosynthesis; malonyl-CoA from acetyl-CoA: step 1/1. Functionally, component of the acetyl coenzyme A carboxylase (ACC) complex. Biotin carboxylase (BC) catalyzes the carboxylation of biotin on its carrier protein (BCCP) and then the CO(2) group is transferred by the transcarboxylase to acetyl-CoA to form malonyl-CoA. The polypeptide is Acetyl-coenzyme A carboxylase carboxyl transferase subunit beta, chloroplastic (Eucalyptus globulus subsp. globulus (Tasmanian blue gum)).